Reading from the N-terminus, the 438-residue chain is Trigger factor (438 aa).

One can recognise a PPIase FKBP-type domain in the interval 163 to 249; it reads EDFVLIDYEG…LKEIRKQILP (87 aa).

Belongs to the FKBP-type PPIase family. Tig subfamily.

The protein resides in the cytoplasm. It carries out the reaction [protein]-peptidylproline (omega=180) = [protein]-peptidylproline (omega=0). Its function is as follows. Involved in protein export. Acts as a chaperone by maintaining the newly synthesized protein in an open conformation. Functions as a peptidyl-prolyl cis-trans isomerase. The polypeptide is Trigger factor (Desulfatibacillum aliphaticivorans).